The chain runs to 483 residues: Altronate oxidoreductase (483 aa).

Residue 18 to 29 (IIQFGEGNFLRA) participates in NAD(+) binding.

The protein belongs to the mannitol dehydrogenase family. UxaB subfamily.

The catalysed reaction is D-altronate + NAD(+) = keto-D-tagaturonate + NADH + H(+). Its pathway is carbohydrate metabolism; pentose and glucuronate interconversion. This Escherichia coli O6:K15:H31 (strain 536 / UPEC) protein is Altronate oxidoreductase.